The primary structure comprises 532 residues: Muscarinic acetylcholine receptor M5 (532 aa).

At 1–29 (MEGDSYHNATTVNGTPVYHQPLERHRLWE) the chain is on the extracellular side. N8 carries an N-linked (GlcNAc...) asparagine glycan. A helical transmembrane segment spans residues 30 to 53 (VISIAAVTAVVSLITIVGNVLVMI). Residues 54 to 66 (SFKVNSQLKTVNN) lie on the Cytoplasmic side of the membrane. The chain crosses the membrane as a helical span at residues 67–87 (YYLLSLACADLIIGIFSMNLY). The Extracellular portion of the chain corresponds to 88-104 (TTYILMGRWALGSLACD). C103 and C183 are joined by a disulfide. The helical transmembrane segment at 105-126 (LWLALDYVASNASVMNLLVISF) threads the bilayer. Topologically, residues 127–146 (DRYFSITRPLTYRAKRTPKR) are cytoplasmic. The chain crosses the membrane as a helical span at residues 147 to 169 (AGVMIGLAWLISFILWAPAILCW). The Extracellular portion of the chain corresponds to 170-191 (QYLVGKRTVPLDECQIQFLSEP). Residues 192-214 (TITFGTAIAAFYIPVSVMTILYC) form a helical membrane-spanning segment. At 215–443 (RIYRETEKRT…LVKERKAAQT (229 aa)) the chain is on the cytoplasmic side. The interval 262–365 (AQRERNQTSW…SDTPNYFLSP (104 aa)) is disordered. A compositionally biased stretch (low complexity) spans 269-281 (TSWSSSRRSASTS). A compositionally biased stretch (polar residues) spans 282–308 (GKPSQATDPSTNQAKAEQLTTCSSYPS). Residues 444–464 (LSAILLAFIITWTPYNIMVLV) traverse the membrane as a helical segment. Over 465-478 (STFCDKCVPVTLWH) the chain is Extracellular. A helical membrane pass occupies residues 479–498 (LGYWLCYVNSTVNPICYALC). The Cytoplasmic segment spans residues 499 to 532 (NRTFRKTFKMLLLCRWKKKKVEEKLYWQGNSKLP). A phosphothreonine mark is found at T501 and T505.

This sequence belongs to the G-protein coupled receptor 1 family. Muscarinic acetylcholine receptor subfamily. CHRM5 sub-subfamily.

It is found in the cell membrane. The protein localises to the postsynaptic cell membrane. In terms of biological role, the muscarinic acetylcholine receptor mediates various cellular responses, including inhibition of adenylate cyclase, breakdown of phosphoinositides and modulation of potassium channels through the action of G proteins. Primary transducing effect is Pi turnover. The protein is Muscarinic acetylcholine receptor M5 (CHRM5) of Macaca mulatta (Rhesus macaque).